A 64-amino-acid chain; its full sequence is Translational regulator CsrA (64 aa).

The protein belongs to the CsrA/RsmA family. Homodimer; the beta-strands of each monomer intercalate to form a hydrophobic core, while the alpha-helices form wings that extend away from the core.

The protein localises to the cytoplasm. Its function is as follows. A key translational regulator that binds mRNA to regulate translation initiation and/or mRNA stability. Mediates global changes in gene expression, shifting from rapid growth to stress survival by linking envelope stress, the stringent response and the catabolite repression systems. Usually binds in the 5'-UTR; binding at or near the Shine-Dalgarno sequence prevents ribosome-binding, repressing translation, binding elsewhere in the 5'-UTR can activate translation and/or stabilize the mRNA. Its function is antagonized by small RNA(s). The chain is Translational regulator CsrA from Actinobacillus pleuropneumoniae serotype 5b (strain L20).